The chain runs to 67 residues: Photosystem II reaction center protein H (67 aa).

A helical membrane pass occupies residues 27 to 47 (GAVPVMAFIGVLLLVFLVILL).

Belongs to the PsbH family. In terms of assembly, PSII is composed of 1 copy each of membrane proteins PsbA, PsbB, PsbC, PsbD, PsbE, PsbF, PsbH, PsbI, PsbJ, PsbK, PsbL, PsbM, PsbT, PsbX, PsbY, Psb30/Ycf12, peripheral proteins PsbO, CyanoQ (PsbQ), PsbU, PsbV and a large number of cofactors. It forms dimeric complexes.

It localises to the cellular thylakoid membrane. One of the components of the core complex of photosystem II (PSII), required for its stability and/or assembly. PSII is a light-driven water:plastoquinone oxidoreductase that uses light energy to abstract electrons from H(2)O, generating O(2) and a proton gradient subsequently used for ATP formation. It consists of a core antenna complex that captures photons, and an electron transfer chain that converts photonic excitation into a charge separation. In Prochlorococcus marinus (strain MIT 9211), this protein is Photosystem II reaction center protein H.